We begin with the raw amino-acid sequence, 168 residues long: Myelin basic protein (168 aa).

Ala-1 carries the post-translational modification N-acetylalanine. Phosphoserine occurs at positions 7 and 12. Tyr-14 carries the phosphotyrosine modification. Thr-17 carries the phosphothreonine modification. Residue Ser-19 is modified to Phosphoserine. Thr-20 is subject to Phosphothreonine. Residues Arg-25 and Arg-31 each carry the citrulline modification. Thr-35 bears the Phosphothreonine mark. The residue at position 40 (Ser-40) is a Phosphoserine. The segment at 42–84 (GRFFSSDRGAPKRGSGKDHAARTTHYGSLPQKSGHRPQDENPV) is disordered. Arg-43 and Arg-49 each carry omega-N-methylarginine. The interval 45 to 86 (FSSDRGAPKRGSGKDHAARTTHYGSLPQKSGHRPQDENPVVH) is induces experimental autoimmune encephalomyelitis (EAE). A Phosphoserine modification is found at Ser-56. Thr-65 is modified (phosphothreonine). Phosphotyrosine is present on Tyr-67. At Ser-74 the chain carries Phosphoserine. 2 positions are modified to phosphothreonine: Thr-93 and Thr-96. Gln-101 carries the deamidated glutamine; partial modification. Arg-105 is modified (omega-N-methylarginine; alternate). Symmetric dimethylarginine; alternate is present on Arg-105. Phosphoserine is present on Ser-113. The residue at position 120 (Lys-120) is an N6-acetyllysine. Arg-128 carries the citrulline modification. Gln-145 is modified (deamidated glutamine). Residue Arg-157 is modified to Citrulline. Ser-159 is subject to Phosphoserine. The residue at position 163 (Ser-163) is a Phosphoserine; by UHMK1. Arg-168 carries the post-translational modification Citrulline.

This sequence belongs to the myelin basic protein family. In terms of assembly, homodimer. Post-translationally, as in other animals, several charge isomers may be produced as a result of optional post-translational modifications, such as phosphorylation of serine or threonine residues, deamidation of glutamine or asparagine residues, citrullination and methylation of arginine residues. In terms of processing, phosphorylated by TAOK2, VRK2, MAPK11, MAPK12, MAPK14 and MINK1. Proteolytically cleaved in B cell lysosomes by cathepsin CTSG which degrades the major immunogenic MBP epitope and prevents the activation of MBP-specific autoreactive T cells. In terms of tissue distribution, found in both the central and the peripheral nervous system.

The protein localises to the myelin membrane. Its function is as follows. Is, with PLP, the most abundant protein component of the myelin membrane in the CNS. Has a role in both the formation and stabilization of this compact multilayer arrangement of bilayers. Each splice variant and charge isomer may have a specialized function in the assembly of an optimized, biochemically functional myelin membrane. The sequence is that of Myelin basic protein (MBP) from Oryctolagus cuniculus (Rabbit).